The primary structure comprises 488 residues: 5'-3' exonuclease PLD3 (488 aa).

Residues 1-38 (MKPKLMYQELKVPVEEPAGELPMNEIEAWKAAEKKARW) are Cytoplasmic-facing. The chain crosses the membrane as a helical; Signal-anchor for type II membrane protein span at residues 39 to 59 (VLLVLILAVVGFGALMTQLFL). At 60–488 (WEYGDLHLFG…DSVGNACRLL (429 aa)) the chain is on the lumenal side. 2 cysteine pairs are disulfide-bonded: cysteine 77-cysteine 237 and cysteine 81-cysteine 235. 2 N-linked (GlcNAc...) asparagine glycosylation sites follow: asparagine 97 and asparagine 132. Residues 194–221 (THGVLHTKFWVVDQTHFYLGSANMDWRS) form the PLD phosphodiesterase 1 domain. Residues histidine 199, lysine 201, and aspartate 206 contribute to the active site. Histidine 199 serves as the catalytic Proton donor. Histidine 199 and lysine 201 together coordinate phosphate. Asparagine 216 provides a ligand contact to phosphate. 3 N-linked (GlcNAc...) asparagine glycosylation sites follow: asparagine 234, asparagine 282, and asparagine 385. Residues cysteine 364 and cysteine 485 are joined by a disulfide bond. Positions 409 to 435 (YARVNHNKYMVTERTTYIGTSNWSGSY) constitute a PLD phosphodiesterase 2 domain. Histidine 414 is a binding site for phosphate. Histidine 414 serves as the catalytic Nucleophile. Residue phenylalanine 436 participates in Mg(2+) binding.

The protein belongs to the phospholipase D family. In terms of assembly, homodimer. Interacts with APP. N-glycosylated. Post-translationally, proteolytically processed to a soluble form that is stable within endosomes and lysosomes. During transport through the secretory pathway becomes proteolysed by cysteine proteases, thereby releasing a stable soluble lysosomal lumenal polypeptide, whereas the transmembrane-bound fragment is rapidly degraded. Its transport route to lysosomes involves ubiquitination and the ESCRT complex. In terms of processing, ubiquitinated. Ubiquitination mediates sorting into lysosomes.

The protein resides in the endoplasmic reticulum membrane. It is found in the lysosome lumen. The protein localises to the early endosome membrane. It localises to the late endosome membrane. Its subcellular location is the golgi apparatus membrane. The protein resides in the endosome membrane. It carries out the reaction Exonucleolytic cleavage in the 5'- to 3'-direction to yield nucleoside 3'-phosphates.. The enzyme catalyses a 5'-end 5'-dephospho-ribonucleotidyl-ribonucleotide-RNA + H2O = a ribonucleoside 3'-phosphate + a 5'-end dephospho-ribonucleoside-RNA + H(+). It catalyses the reaction a ribonucleoside 3'-phosphate-2'-3'-cyclophospho-GMP + H2O = a ribonucleoside 3'-phosphate + 2',3'-cyclophospho-GMP + H(+). The catalysed reaction is a 5'-end 5'-dephospho-2'-deoxyribonucleotidyl-2'-deoxyribonucleotide in single-stranded DNA + H2O = a 5'-end dephospho-2'-deoxyribonucleoside in single-stranded DNA + a 2'-deoxyribonucleoside 3'-phosphate + H(+). It carries out the reaction a 5'-end 5'-phospho-2'-deoxyribonucleotide in single-stranded DNA + H2O = a 5'-end 5'-dephospho-2'-deoxyribonucleotide in single-stranded DNA + phosphate. The enzyme catalyses a 3-lyso-sn-glycero-1-phospho-(3'-acyl-1'-sn-glycerol) + a 1-acyl-sn-glycerol = a 3-acyl-sn-glycero-1-phospho-(3'-acyl-1'-sn-glycerol) + glycerol. It catalyses the reaction 3-lyso-sn-glycero-1-phospho-(3'-(9Z-octadecenoyl)-1'-sn-glycerol) + 1-(9Z-octadecenoyl)-sn-glycerol = 3-(9Z-octadecenoyl)-sn-glycero-1-phospho-(3'-(9Z-octadecenoyl)-1'-sn-glycerol) + glycerol. Its function is as follows. 5'-&gt;3' exonuclease that hydrolyzes the phosphodiester bond of single-stranded DNA (ssDNA) and RNA molecules to form nucleoside 3'-monophosphates and 5'-end 5'-hydroxy deoxyribonucleotide/ribonucleotide fragments. Partially redundant with PLD4, can cleave all four nucleotides displaying higher efficiency for ssDNA and RNA fragments initiated with uridine and guanosine residues and lower efficiency for cytidine-initiated substrates. As a result, it does not always degrade polynucleotides to the single nucleotide level, it can stall at specific sites sparing certain fragments from exonucleolytic degradation. Processes self and pathogenic ssDNA and RNA molecules that reach the endolysosomal compartment via phagocytosis or autophagy and may serve as 'danger' signals for recognition by innate immune receptors such as toll-like receptors (TLRs). Degrades mitochondrial CpG-rich ssDNA fragments to prevent TLR9 activation and autoinflammatory response, but it can cleave viral RNA to generate ligands for TLR7 activation and initiate antiviral immune responses. In plasmacytoid dendritic cells, it cooperates with endonuclease RNASET2 to release 2',3'-cyclic guanosine monophosphate (2',3'-cGMP), a potent stimulatory ligand for TLR7. Produces 2',3'-cGMPs and cytidine-rich RNA fragments that occupy TLR7 ligand-binding pockets and trigger a signaling-competent state. Can exert polynucleotide phosphatase activity toward 5'-phosphorylated ssDNA substrates although at a slow rate. Transphosphatidylase that catalyzes the exchange with R to S stereo-inversion of the glycerol moiety between (S,R)-lysophosphatidylglycerol (LPG) and monoacylglycerol (MAG) substrates to yield (S,S)-bis(monoacylglycero)phosphate (BMP). Can synthesize a variety of (S,S)-BMPs representing the main phospholipid constituent of lysosomal intralumenal vesicle (ILV) membranes that bind acid hydrolases for lipid degradation. Regulates the homeostasis and interorganellar communication of the endolysosomal system with an overall impact on cellular removal of dysfunctional organelles via autophagy as well as proper protein and lipid turnover. May play a role in myotube formation in response to ER stress. The polypeptide is 5'-3' exonuclease PLD3 (Pld3) (Rattus norvegicus (Rat)).